The chain runs to 387 residues: Protein kinase gsk3 (387 aa).

The 285-residue stretch at 32–316 folds into the Protein kinase domain; it reads YTSSKVVGSG…AAEAMCHPFF (285 aa). ATP contacts are provided by residues 38–46 and Lys-61; that span reads VGSGSFGVV. The Proton acceptor role is filled by Asp-157. Position 191 is a phosphoserine (Ser-191). Phosphotyrosine; by autocatalysis is present on Tyr-192. Position 335 is a phosphoserine (Ser-335).

This sequence belongs to the protein kinase superfamily. CMGC Ser/Thr protein kinase family. GSK-3 subfamily. Post-translationally, autophosphorylated on tyrosine residues.

It is found in the cytoplasm. The protein localises to the nucleus. The catalysed reaction is L-seryl-[protein] + ATP = O-phospho-L-seryl-[protein] + ADP + H(+). The enzyme catalyses L-threonyl-[protein] + ATP = O-phospho-L-threonyl-[protein] + ADP + H(+). Functionally, interacts with cdc14 which is thought to play a role in the initiation and completion of mitosis. Involved in the positive regulation of mis12. This chain is Protein kinase gsk3 (gsk3), found in Schizosaccharomyces pombe (strain 972 / ATCC 24843) (Fission yeast).